The primary structure comprises 218 residues: Peptidase E (218 aa).

Catalysis depends on charge relay system residues Ser-123, Asp-138, and His-160.

Belongs to the peptidase S51 family.

The protein localises to the cytoplasm. The enzyme catalyses Dipeptidase E catalyzes the hydrolysis of dipeptides Asp-|-Xaa. It does not act on peptides with N-terminal Glu, Asn or Gln, nor does it cleave isoaspartyl peptides.. Hydrolyzes dipeptides containing N-terminal aspartate residues. May play a role in allowing the cell to use peptide aspartate to spare carbon otherwise required for the synthesis of the aspartate family of amino acids. In Haemophilus influenzae (strain ATCC 51907 / DSM 11121 / KW20 / Rd), this protein is Peptidase E.